Consider the following 254-residue polypeptide: Ribosomal protein L11 methyltransferase (254 aa).

The S-adenosyl-L-methionine site is built by T107, G128, D149, S175, and N191.

It belongs to the methyltransferase superfamily. PrmA family.

It is found in the cytoplasm. It catalyses the reaction L-lysyl-[protein] + 3 S-adenosyl-L-methionine = N(6),N(6),N(6)-trimethyl-L-lysyl-[protein] + 3 S-adenosyl-L-homocysteine + 3 H(+). The catalysed reaction is an N-terminal L-alpha-aminoacyl-[protein] + 3 S-adenosyl-L-methionine = an N-terminal trimethyl-L-alpha-aminoacyl-[protein] + 3 S-adenosyl-L-homocysteine + 3 H(+). Functionally, methylates ribosomal protein L11. Preferentially recognizes free L11 before its incorporation into 50S subunits. This function is dispensable for growth and thermostability. This is Ribosomal protein L11 methyltransferase from Thermus thermophilus (strain ATCC 27634 / DSM 579 / HB8).